Reading from the N-terminus, the 244-residue chain is Large ribosomal subunit protein uL30 (244 aa).

Belongs to the universal ribosomal protein uL30 family.

The sequence is that of Large ribosomal subunit protein uL30 (RPL7) from Candida glabrata (strain ATCC 2001 / BCRC 20586 / JCM 3761 / NBRC 0622 / NRRL Y-65 / CBS 138) (Yeast).